Reading from the N-terminus, the 534-residue chain is Unguisins hydrolase ungD' (534 aa).

It belongs to the peptidase S12 family.

Its pathway is secondary metabolite biosynthesis. Hydrolase; part of the gene cluster that mediates the biosynthesis of the unguisins, gamma-aminobutyric acid (GABA)-containing fungal cyclic heptapeptides with the amino acid sequence cyclo-(D-Ala1-D-Val2-L-Leu3-beta-MePhe4-D-Ala5-D-Trp6-GABA7) for unguisin H and cyclo-(D-Ala1-D-Ala2-L-Leu3-beta-MePhe4-D-Ala5-D-Trp6-GABA7) for unguisin I. Within the pathway, the hydrolase ungD' catalyzes the hydrolysis between the D-tryptophan and GABA residues of unguisins H and I to produce the corresponding linear peptides. The alanine racemase ungC' catalyzes the interconversion of L-alanine and D-alanine, providing the D-alanine which is accepted by the first adenylation domain of the nonribosomal peptide synthetase (NRPS) ungA', whereas the methyltransferase ungE' provides the (2R,3R)-beta-methylphenylalanine residue incorporated by the module 4. UngA' is the main enzyme within the cluster which condenses the 7 residues using its respective 7 modules. The terminal condensation domain (Ct) is involved in cyclization with D-alanine and thereby releasing of unguisins H and I. This Aspergillus campestris (strain IBT 28561) protein is Unguisins hydrolase ungD'.